We begin with the raw amino-acid sequence, 625 residues long: 1-deoxy-D-xylulose-5-phosphate synthase (625 aa).

Residues histidine 80 and 121–123 (GHS) each bind thiamine diphosphate. Mg(2+) is bound at residue aspartate 152. Residues 153-154 (GS), asparagine 181, tyrosine 290, and glutamate 371 each bind thiamine diphosphate. Residue asparagine 181 participates in Mg(2+) binding.

Belongs to the transketolase family. DXPS subfamily. In terms of assembly, homodimer. Mg(2+) is required as a cofactor. Requires thiamine diphosphate as cofactor.

The catalysed reaction is D-glyceraldehyde 3-phosphate + pyruvate + H(+) = 1-deoxy-D-xylulose 5-phosphate + CO2. The protein operates within metabolic intermediate biosynthesis; 1-deoxy-D-xylulose 5-phosphate biosynthesis; 1-deoxy-D-xylulose 5-phosphate from D-glyceraldehyde 3-phosphate and pyruvate: step 1/1. Functionally, catalyzes the acyloin condensation reaction between C atoms 2 and 3 of pyruvate and glyceraldehyde 3-phosphate to yield 1-deoxy-D-xylulose-5-phosphate (DXP). This is 1-deoxy-D-xylulose-5-phosphate synthase from Haemophilus influenzae (strain PittGG).